The chain runs to 280 residues: Secreted RxLR effector protein 39 (280 aa).

Residues 1–19 (MRGAYYVAIALLIVASCSA) form the signal peptide. A RxLR-dEER motif is present at residues 49–70 (RVLRGSRDLKNKWAVHAGGEDR). The interval 229 to 249 (EVKARSSKRQRTNPMLNNMDG) is disordered.

The protein belongs to the RxLR effector family.

The protein resides in the secreted. The protein localises to the host nucleus. Functionally, secreted effector that completely suppresses the host cell death induced by cell death-inducing proteins. This is Secreted RxLR effector protein 39 from Plasmopara viticola (Downy mildew of grapevine).